The following is a 2319-amino-acid chain: A-kinase anchor protein 6 (2319 aa).

Polar residues-rich tracts occupy residues M1–R12 and G324–P339. Disordered stretches follow at residues M1–S24, V301–P369, S493–G532, L566–V614, and T691–K757. A compositionally biased stretch (low complexity) spans S340–S351. Composition is skewed to polar residues over residues G518–G532 and L566–I591. Positions S697–S711 are enriched in low complexity. Basic and acidic residues predominate over residues K735–S754. Spectrin repeat units follow at residues Q762 to E848 and E1036 to D1150. S1073 bears the Phosphoserine mark. Residues K1250–Q1272 are disordered. The span at S1255–A1265 shows a compositional bias: acidic residues. 2 positions are modified to phosphoserine: S1570 and S1595. 3 disordered regions span residues V1821–T1842, E1900–K1925, and K1963–S1983. 3 stretches are compositionally biased toward polar residues: residues D1830–T1842, N1911–L1920, and N1972–K1982. The tract at residues I2063–Q2076 is PKA-RII subunit binding domain. Over residues F2198–S2215 the composition is skewed to low complexity. The segment at F2198 to R2319 is disordered.

As to quaternary structure, interacts with RII subunit of PKA, phosphatase 2B (calcineurin) and AKAP79. Interacts with SYNPO2. As to expression, highly expressed in cardiac and skeletal muscle, followed by brain.

Its subcellular location is the sarcoplasmic reticulum. The protein localises to the nucleus membrane. Functionally, binds to type II regulatory subunits of protein kinase A and anchors/targets them to the nuclear membrane or sarcoplasmic reticulum. May act as an adapter for assembling multiprotein complexes. This Homo sapiens (Human) protein is A-kinase anchor protein 6 (AKAP6).